We begin with the raw amino-acid sequence, 276 residues long: Orotidine 5'-phosphate decarboxylase (276 aa).

Catalysis depends on K96, which acts as the Proton donor.

Belongs to the OMP decarboxylase family. Type 2 subfamily.

It catalyses the reaction orotidine 5'-phosphate + H(+) = UMP + CO2. Its pathway is pyrimidine metabolism; UMP biosynthesis via de novo pathway; UMP from orotate: step 2/2. This is Orotidine 5'-phosphate decarboxylase from Porphyromonas gingivalis (strain ATCC BAA-308 / W83).